Reading from the N-terminus, the 345-residue chain is Pyruvate dehydrogenase E1 component subunit alpha (345 aa).

In terms of assembly, heterodimer of an alpha and a beta chain. The cofactor is thiamine diphosphate.

The catalysed reaction is N(6)-[(R)-lipoyl]-L-lysyl-[protein] + pyruvate + H(+) = N(6)-[(R)-S(8)-acetyldihydrolipoyl]-L-lysyl-[protein] + CO2. In terms of biological role, the pyruvate dehydrogenase complex catalyzes the overall conversion of pyruvate to acetyl-CoA and CO(2). It contains multiple copies of three enzymatic components: pyruvate dehydrogenase (E1), dihydrolipoamide acetyltransferase (E2) and lipoamide dehydrogenase (E3). The polypeptide is Pyruvate dehydrogenase E1 component subunit alpha (pdhA) (Acholeplasma laidlawii).